Reading from the N-terminus, the 278-residue chain is Sulfur carrier protein FdhD (278 aa).

Residue cysteine 121 is the Cysteine persulfide intermediate of the active site. Residue 260–265 (FCKPGR) coordinates Mo-bis(molybdopterin guanine dinucleotide).

Belongs to the FdhD family.

It localises to the cytoplasm. Required for formate dehydrogenase (FDH) activity. Acts as a sulfur carrier protein that transfers sulfur from IscS to the molybdenum cofactor prior to its insertion into FDH. This is Sulfur carrier protein FdhD from Klebsiella pneumoniae subsp. pneumoniae (strain ATCC 700721 / MGH 78578).